Here is an 85-residue protein sequence, read N- to C-terminus: Progonadoliberin-2 (85 aa).

Positions M1–A23 are cleaved as a signal peptide. At Q24 the chain carries Pyrrolidone carboxylic acid. G33 is modified (glycine amide).

This sequence belongs to the GnRH family.

The protein localises to the secreted. Stimulates the secretion of gonadotropins. The chain is Progonadoliberin-2 (gnrh2) from Dicentrarchus labrax (European seabass).